The primary structure comprises 60 residues: Large ribosomal subunit protein bL32 (60 aa).

This sequence belongs to the bacterial ribosomal protein bL32 family.

In Clostridium novyi (strain NT), this protein is Large ribosomal subunit protein bL32.